The sequence spans 308 residues: D-alanine--D-alanine ligase (308 aa).

An ATP-grasp domain is found at 105–302 (KAIFKALGLD…FPELCERILD (198 aa)). 133–188 (DLPFGVPCVVKPAGEGSSVGVQIVKDAARLADACREAARYKGDVVVERYVKGTEVN) provides a ligand contact to ATP. Asp-256, Glu-269, and Asn-271 together coordinate Mg(2+).

This sequence belongs to the D-alanine--D-alanine ligase family. Mg(2+) is required as a cofactor. It depends on Mn(2+) as a cofactor.

The protein resides in the cytoplasm. It carries out the reaction 2 D-alanine + ATP = D-alanyl-D-alanine + ADP + phosphate + H(+). It functions in the pathway cell wall biogenesis; peptidoglycan biosynthesis. Functionally, cell wall formation. This is D-alanine--D-alanine ligase from Anaeromyxobacter sp. (strain Fw109-5).